The sequence spans 199 residues: MSANEFYSSGQQGQYNQQNNQERTGAPNNGQYGADNGNPNGERGLFSTIVGGSAGAYAGSKVSNNHSKLSGVLGAIGGAFLANKISDERKEHKQQEQYGNSNFGGAPQGGHNNHHRQDNNNNNGGFGGPGGPGGQGFGRQGPQGFGGPGPQEFGGPGGQGFGGPNPQEFGGPGGQGFGGPNPQEFGGQGRQGFNGGSRW.

Residues 1-48 (MSANEFYSSGQQGQYNQQNNQERTGAPNNGQYGADNGNPNGERGLFST) form a disordered region. Residue S2 is modified to N-acetylserine. The span at 7–21 (YSSGQQGQYNQQNNQ) shows a compositional bias: low complexity. A compositionally biased stretch (polar residues) spans 22 to 31 (ERTGAPNNGQ). Residues S53 and S70 each carry the phosphoserine modification. Residues 89 to 199 (RKEHKQQEQY…RQGFNGGSRW (111 aa)) are disordered. Gly residues-rich tracts occupy residues 124–163 (GGFG…GFGG), 170–179 (GGPGGQGFGG), and 186–199 (GGQG…GSRW).

The protein localises to the mitochondrion. This is an uncharacterized protein from Saccharomyces cerevisiae (strain ATCC 204508 / S288c) (Baker's yeast).